Reading from the N-terminus, the 252-residue chain is Glucosamine-6-phosphate deaminase (252 aa).

Asp-67 (proton acceptor; for enolization step) is an active-site residue. Asn-137 functions as the For ring-opening step in the catalytic mechanism. The Proton acceptor; for ring-opening step role is filled by His-139. Glu-144 (for ring-opening step) is an active-site residue.

This sequence belongs to the glucosamine/galactosamine-6-phosphate isomerase family. NagB subfamily.

The enzyme catalyses alpha-D-glucosamine 6-phosphate + H2O = beta-D-fructose 6-phosphate + NH4(+). Its pathway is amino-sugar metabolism; N-acetylneuraminate degradation; D-fructose 6-phosphate from N-acetylneuraminate: step 5/5. In terms of biological role, catalyzes the reversible isomerization-deamination of glucosamine 6-phosphate (GlcN6P) to form fructose 6-phosphate (Fru6P) and ammonium ion. This is Glucosamine-6-phosphate deaminase from Staphylococcus aureus (strain Mu3 / ATCC 700698).